Here is a 343-residue protein sequence, read N- to C-terminus: Allergin-1 (343 aa).

The N-terminal stretch at 1-19 (MWSHLNRLLFWSIFSSVTC) is a signal peptide. Over 20-227 (RKAVLDCEAM…GGDSCPFCLK (208 aa)) the chain is Extracellular. Ig-like C2-type domains follow at residues 35–118 (PSPC…RDFS) and 128–213 (PVLN…HPVT). 6 N-linked (GlcNAc...) asparagine glycosylation sites follow: N51, N60, N89, N151, N157, and N182. 2 cysteine pairs are disulfide-bonded: C56–C103 and C147–C196. A helical membrane pass occupies residues 228–248 (LLLPGLLLLLVVIILILAFWV). Residues 249 to 343 (LPKYKTRKAM…SGYVYSELNF (95 aa)) are Cytoplasmic-facing. Short sequence motifs (ITIM motif) lie at residues 311 to 316 (LQYATP) and 336 to 341 (YVYSEL). Residues Y313 and Y338 each carry the phosphotyrosine modification.

In terms of assembly, monomer. Interacts (tyrosine-phosphorylated) with PTPN6, PTPN11 and INPP5D. Post-translationally, N-glycosylated. In terms of tissue distribution, expressed in myeloid cells (dendritic cells, macrophages and neutrophils, weak expression on B-cells but not in T-cells or natural killer cells), peripheral blood basophils and mast cells (at protein level).

It localises to the cell membrane. Functionally, immunoglobulin-like receptor which plays an inhibitory role in degranulation of mast cells. Negatively regulates IgE-mediated mast cell activation and suppresses the type I immediate hypersensitivity reaction. In Homo sapiens (Human), this protein is Allergin-1 (MILR1).